We begin with the raw amino-acid sequence, 920 residues long: Androgen receptor (920 aa).

The modulating stretch occupies residues 1-559 (MEVQLGLGRV…IDYYFPPQKT (559 aa)). Residues 1–587 (MEVQLGLGRV…GSCKVFFKRA (587 aa)) are interaction with ZNF318. 2 disordered regions span residues 36–167 (NPGP…LSLL) and 195–228 (QQQQ…YLGG). A compositionally biased stretch (low complexity) spans 44 to 91 (AASAAPPGASLLLLQQQQQQQQQQQQQQQQQQQQQQQETSPRQQQQQQ). Ser83 is subject to Phosphoserine; by CDK9. A Phosphoserine modification is found at Ser96. Positions 195–217 (QQQQQEAVSEGSSSGRAREASGA) are enriched in low complexity. Over residues 218–228 (PTSSKDNYLGG) the composition is skewed to polar residues. A Phosphotyrosine; by CSK modification is found at Tyr225. A Phosphoserine modification is found at Ser258. Tyr269 is modified (phosphotyrosine; by CSK and TNK2). 4 positions are modified to phosphotyrosine; by CSK: Tyr309, Tyr348, Tyr359, and Tyr364. At Tyr365 the chain carries Phosphotyrosine; by CSK and TNK2. Lys388 participates in a covalent cross-link: Glycyl lysine isopeptide (Lys-Gly) (interchain with G-Cter in SUMO). A Phosphotyrosine; by CSK modification is found at Tyr395. Residue Lys521 forms a Glycyl lysine isopeptide (Lys-Gly) (interchain with G-Cter in SUMO) linkage. Residues Tyr535 and Tyr552 each carry the phosphotyrosine; by CSK modification. The segment at 552 to 919 (YYFPPQKTCL…GKVKPIYFHT (368 aa)) is interaction with LPXN. 2 consecutive NR C4-type zinc fingers follow at residues 560-580 (CLIC…CGSC) and 596-620 (CASR…LRKC). A DNA-binding region (nuclear receptor) is located at residues 560–632 (CLICGDEASG…AGMTLGARKL (73 aa)). The tract at residues 572-662 (YGALTCGSCK…TEETTQKLTV (91 aa)) is interaction with HIPK3. Residues 592-919 (QKYLCASRND…GKVKPIYFHT (328 aa)) are interaction with CCAR1. The tract at residues 625-919 (MTLGARKLKK…GKVKPIYFHT (295 aa)) is interaction with KAT7. Residue Ser651 is modified to Phosphoserine; by STK4/MST1. Residues 669–900 (ECQPIFLNVL…DFPEMMAEII (232 aa)) enclose the NR LBD domain. Asn706 and Arg753 together coordinate 17beta-hydroxy-5alpha-androstan-3-one. Glycyl lysine isopeptide (Lys-Gly) (interchain with G-Cter in ubiquitin) cross-links involve residues Lys846 and Lys848. Residue Thr878 coordinates 17beta-hydroxy-5alpha-androstan-3-one. Phosphotyrosine; by CSK is present on Tyr916.

Belongs to the nuclear hormone receptor family. NR3 subfamily. Binds DNA as a homodimer. Part of a ternary complex containing AR, EFCAB6/DJBP and PARK7. Interacts with HIPK3 and NR0B2 in the presence of androgen. The ligand binding domain interacts with KAT7/HBO1 in the presence of dihydrotestosterone. Interacts with EFCAB6/DJBP, PQBP1, RANBP9, RBAK, SPDEF, SRA1, TGFB1I1 and RREB1. Interacts with ZMIZ1/ZIMP10 and ZMIZ2/ZMIP7 which both enhance its transactivation activity. Interacts with SLC30A9 and RAD54L2/ARIP4. Interacts with MACROD1 (via macro domain). Interacts via the ligand-binding domain with LXXLL and FXXLF motifs from NCOA1, NCOA2, NCOA3 and MAGEA11. Interacts (via nuclear receptor DNA binding domain and nuclear receptor ligand binding domain) with NCOA4. The AR N-terminal poly-Gln region binds Ran resulting in enhancement of AR-mediated transactivation. Ran-binding decreases as the poly-Gln length increases. Interacts with HIP1 (via coiled coil domain). Interacts (via ligand-binding domain) with TRIM68. Interacts with TNK2. Interacts with USP26. Interacts with RNF6. Interacts (regulated by RNF6 probably through polyubiquitination) with RNF14; regulates AR transcriptional activity. Interacts with PRMT2 and TRIM24. Interacts with RACK1. Interacts with RANBP10; this interaction enhances dihydrotestosterone-induced AR transcriptional activity. Interacts with PRPF6 in a hormone-independent way; this interaction enhances dihydrotestosterone-induced AR transcriptional activity. Interacts with STK4/MST1. Interacts with ZIPK/DAPK3. Interacts with LPXN. Interacts with MAK. Part of a complex containing AR, MAK and NCOA3. Interacts with CRY1. Interacts with CCAR1 and GATA2. Interacts with ZNF318. Interacts with BUD31. Interacts with ARID4A. Interacts with ARID4B. Interacts (via NR LBD domain) with ZBTB7A; the interaction is direct and androgen-dependent. Interacts with NCOR1. Interacts with NCOR2. Interacts with CRY2 in a ligand-dependent manner. Sumoylated on Lys-388 (major) and Lys-521. Ubiquitinated. Deubiquitinated by USP26. 'Lys-6' and 'Lys-27'-linked polyubiquitination by RNF6 modulates AR transcriptional activity and specificity. In terms of processing, phosphorylated in prostate cancer cells in response to several growth factors including EGF. Phosphorylation is induced by c-Src kinase (CSK). Tyr-535 is one of the major phosphorylation sites and an increase in phosphorylation and Src kinase activity is associated with prostate cancer progression. Phosphorylation by TNK2 enhances the DNA-binding and transcriptional activity and may be responsible for androgen-independent progression of prostate cancer. Phosphorylation at Ser-83 by CDK9 regulates AR promoter selectivity and cell growth. Phosphorylation by PAK6 leads to AR-mediated transcription inhibition. Post-translationally, palmitoylated by ZDHHC7 and ZDHHC21. Palmitoylation is required for plasma membrane targeting and for rapid intracellular signaling via ERK and AKT kinases and cAMP generation. In terms of tissue distribution, mainly expressed in heart and skeletal muscle. Expressed in basal and stromal cells of the prostate (at protein level).

The protein localises to the nucleus. It is found in the cytoplasm. With respect to regulation, AIM-100 (4-amino-5,6-biaryl-furo[2,3-d]pyrimidine) suppresses TNK2-mediated phosphorylation at Tyr-269. Inhibits the binding of the Tyr-269 phosphorylated form to androgen-responsive enhancers (AREs) and its transcriptional activity. Steroid hormone receptors are ligand-activated transcription factors that regulate eukaryotic gene expression and affect cellular proliferation and differentiation in target tissues. Transcription factor activity is modulated by bound coactivator and corepressor proteins like ZBTB7A that recruits NCOR1 and NCOR2 to the androgen response elements/ARE on target genes, negatively regulating androgen receptor signaling and androgen-induced cell proliferation. Transcription activation is also down-regulated by NR0B2. Activated, but not phosphorylated, by HIPK3 and ZIPK/DAPK3. Its function is as follows. Lacks the C-terminal ligand-binding domain and may therefore constitutively activate the transcription of a specific set of genes independently of steroid hormones. The polypeptide is Androgen receptor (AR) (Homo sapiens (Human)).